Here is a 1100-residue protein sequence, read N- to C-terminus: Isoleucine--tRNA ligase (1100 aa).

A 'HIGH' region motif is present at residues 48–58 (PFATGLPHFGH). The short motif at 626 to 630 (KMSKS) is the 'KMSKS' region element. Lys-629 serves as a coordination point for ATP.

This sequence belongs to the class-I aminoacyl-tRNA synthetase family. IleS type 2 subfamily. Monomer. Requires Zn(2+) as cofactor.

The protein resides in the cytoplasm. The catalysed reaction is tRNA(Ile) + L-isoleucine + ATP = L-isoleucyl-tRNA(Ile) + AMP + diphosphate. In terms of biological role, catalyzes the attachment of isoleucine to tRNA(Ile). As IleRS can inadvertently accommodate and process structurally similar amino acids such as valine, to avoid such errors it has two additional distinct tRNA(Ile)-dependent editing activities. One activity is designated as 'pretransfer' editing and involves the hydrolysis of activated Val-AMP. The other activity is designated 'posttransfer' editing and involves deacylation of mischarged Val-tRNA(Ile). This is Isoleucine--tRNA ligase from Treponema denticola (strain ATCC 35405 / DSM 14222 / CIP 103919 / JCM 8153 / KCTC 15104).